Here is a 4377-residue protein sequence, read N- to C-terminus: MAHAASQLKKNRDLEINAEEEPEKKRKHRKRSRDRKKKSDANASYLRAARAGHLEKALDYIKNGVDINICNQNGLNALHLASKEGHVEVVSELLQREANVDAATKKGNTALHIASLAGQAEVVKVLVTNGANVNAQSQNGFTPLYMAAQENHLEVVKFLLDNGASQSLATEDGFTPLAVALQQGHDQVVSLLLENDTKGKVRLPALHIAARKDDTKAAALLLQNDNNADVESKSGFTPLHIAAHYGNINVATLLLNRAAAVDFTARNDITPLHVASKRGNANMVKLLLDRGAKIDAKTRDGLTPLHCGARSGHEQVVEMLLDRAAPILSKTKNGLSPLHMATQGDHLNCVQLLLQHNVPVDDVTNDYLTALHVAAHCGHYKVAKVLLDKKANPNAKALNGFTPLHIACKKNRIKVMELLLKHGASIQAVTESGLTPIHVAAFMGHVNIVSQLMHHGASPNTTNVRGETALHMAARSGQAEVVRYLVQDGAQVEAKAKDDQTPLHISARLGKADIVQQLLQQGASPNAATTSGYTPLHLSAREGHEDVAAFLLDHGASLSITTKKGFTPLHVAAKYGKLEVANLLLQKSASPDAAGKSGLTPLHVAAHYDNQKVALLLLDQGASPHAAAKNGYTPLHIAAKKNQMDIATTLLEYGADANAVTRQGIASVHLAAQEGHVDMVSLLLGRNANVNLSNKSGLTPLHLAAQEDRVNVAEVLVNQGAHVDAQTKMGYTPLHVGCHYGNIKIVNFLLQHSAKVNAKTKNGYTPLHQAAQQGHTHIINVLLQNNASPNELTVNGNTALGIARRLGYISVVDTLKIVTEETMTTTTVTEKHKMNVPETMNEVLDMSDDEVRKANAPEMLSDGEYISDVEEGEDAMTGDTDKYLGPQDLKELGDDSLPAEGYMGFSLGARSASLRSFSSDRSYTLNRSSYARDSMMIEELLVPSKEQHLTFTREFDSDSLRHYSWAADTLDNVNLVSSPIHSGFLVSFMVDARGGSMRGSRHHGMRIIIPPRKCTAPTRITCRLVKRHKLANPPPMVEGEGLASRLVEMGPAGAQFLGPVIVEIPHFGSMRGKERELIVLRSENGETWKEHQFDSKNEDLTELLNGMDEELDSPEELGKKRICRIITKDFPQYFAVVSRIKQESNQIGPEGGILSSTTVPLVQASFPEGALTKRIRVGLQAQPVPDEIVKKILGNKATFSPIVTVEPRRRKFHKPITMTIPVPPPSGEGVSNGYKGDTTPNLRLLCSITGGTSPAQWEDITGTTPLTFIKDCVSFTTNVSARFWLADCHQVLETVGLATQLYRELICVPYMAKFVVFAKMNDPVESSLRCFCMTDDKVDKTLEQQENFEEVARSKDIEVLEGKPIYVDCYGNLAPLTKGGQQLVFNFYSFKENRLPFSIKIRDTSQEPCGRLSFLKEPKTTKGLPQTAVCNLNITLPAHKKETESDQDDEIEKTDRRQSFASLALRKRYSYLTEPGMIERSTGATRSLPTTYSYKPFFSTRPYQSWTTAPITVPGPAKSGFTSLSSSSSNTPSASPLKSIWSVSTPSPIKSTLGASTTSSVKSISDVASPIRSFRTMSSPIKTVVSQSPYNIQVSSGTLARAPAVTEATPLKGLASNSTFSSRTSPVTTAGSLLERSSITMTPPASPKSNINMYSSSLPFKSIITSAAPLISSPLKSVVSPVKSAVDVISSAKITMASSLSSPVKQMPGHAEVALVNGSISPLKYPSSSTLINGCKATATLQEKISSATNSVSSVVSAATDTVEKVFSTTTAMPFSPLRSYVSAAPSAFQSLRTPSASALYTSLGSSISATTSSVTSSIITVPVYSVVNVLPEPALKKLPDSNSFTKSAAALLSPIKTLTTETHPQPHFSRTSSPVKSSLFLAPSALKLSTPSSLSSSQEILKDVAEMKEDLMRMTAILQTDVPEEKPFQPELPKEGRIDDEEPFKIVEKVKEDLVKVSEILKKDVCVDNKGSPKSPKSDKGHSPEDDWIEFSSEEIREARQQAAASQSPSLPERVQVKAKAASEKDYNLTKVIDYLTNDIGSSSLTNLKYKFEDAKKDGEERQKRVLKPAIALQEHKLKMPPASMRTSTSEKELCKMADSFFGTDTILESPDDFSQHDQDKSPLSDSGFETRSEKTPSAPQSAESTGPKPLFHEVPIPPVITETRTEVVHVIRSYDPSAGDVPQTQPEEPVSPKPSPTFMELEPKPTTSSIKEKVKAFQMKASSEEDDHNRVLSKGMRVKEETHITTTTRMVYHSPPGGEGASERIEETMSVHDIMKAFQSGRDPSKELAGLFEHKSAVSPDVHKSAAETSAQHAEKDNQMKPKLERIIEVHIEKGNQAEPTEVIIRETKKHPEKEMYVYQKDLSRGDINLKDFLPEKHDAFPCSEEQGQQEEEELTAEESLPSYLESSRVNTPVSQEEDSRPSSAQLISDDSYKTLKLLSQHSIEYHDDELSELRGESYRFAEKMLLSEKLDVSHSDTEESVTDHAGPPSSELQGSDKRSREKIATAPKKEILSKIYKDVSENGVGKVSKDEHFDKVTVLHYSGNVSSPKHAMWMRFTEDRLDRGREKLIYEDRVDRTVKEAEEKLTEVSQFFRDKTEKLNDELQSPEKKARPKNGKEYSSQSPTSSSPEKVLLTELLASNDEWVKARQHGPDGQGFPKAEEKAPSLPSSPEKMVLSQQTEDSKSTVEAKGSISQSKAPDGPQSGFQLKQSKLSSIRLKFEQGTHAKSKDMSQEDRKSDGQSRIPVKKIQESKLPVYQVFAREKQQKAIDLPDESVSVQKDFMVLKTKDEHAQSNEIVVNDSGSDNVKKQRTEMSSKAMPDSFSEQQAKDLACHITSDLATRGPWDKKVFRTWESSGATNNKSQKEKLSHVLVHDVRENHIGHPESKSVDQKNEFMSVTERERKLLTNGSLSEIKEMTVKSPSKKVLYREYVVKEGDHPGGLLDQPSRRSESSAVSHIPVRVADERRMLSSNIPDGFCEQSAFPKHELSQKLSQSSMSKETVETQHFNSIEDEKVTYSEISKVSKHQSYVGLCPPLEETETSPTKSPDSLEFSPGKESPSSDVFDHSPIDGLEKLAPLAQTEGGKEIKTLPVYVSFVQVGKQYEKEIQQGGVKKIISQECKTVQETRGTFYTTRQQKQPPSPQGSPEDDTLEQVSFLDSSGKSPLTPETPSSEEVSYEFTSKTPDSLIAYIPGKPSPIPEVSEESEEEEQAKSTSLKQTTVEETAVEREMPNDVSKDSNQRPKNNRVAYIEFPPPPPLDADQIESDKKHHYLPEKEVDMIEVNLQDEHDKYQLAEPVIRVQPPSPVPPGADVSDSSDDESIYQPVPVKKYTFKLKEVDDEQKEKPKASAEKASNQKELESNGSGKDNEFGLGLDSPQNEIAQNGNNDQSITECSIATTAEFSHDTDATEIDSLDGYDLQDEDDGLTESDSKLPIQAMEIKKDIWNTEGILKPADRSFSQSKLEVIEEEGKVGPDEDKPPSKSSSSEKTPDKTDQKSGAQFFTLEGRHPDRSVFPDTYFSYKVDEEFATPFKTVATKGLDFDPWSNNRGDDEVFDSKSREDETKPFGLAVEDRSPATTPDTTPARTPTDESTPTSEPNPFPFHEGKMFEMTRSGAIDMSKRDFVEERLQFFQIGEHTSEGKSGDQGEGDKSMVTATPQPQSGDTTVETNLERNVETPTVEPNPSIPTSGECQEGTSSSGSLEKSAAATNTSKVDPKLRTPIKMGISASTMTMKKEGPGEITDKIEAVMTSCQGLENETITMISNTANSQMGVRPHEKHDFQKDNFNNNNNLDSSTIQTDNIMSNIVLTEHSAPTCTTEKDNPVKVSSGKKTGVLQGHCVRDKQKVLGEQQKTKELIGIRQKSKLPIKATSPKDTFPPNHMSNTKASKMKQVSQSEKTKALTTSSCVDVKSRIPVKNTHRDNIIAVRKACATQKQGQPEKGKAKQLPSKLPVKVRSTCVTTTTTTATTTTTTTTTTTTSCTVKVRKSQLKEVCKHSIEYFKGISGETLKLVDRLSEEEKKMQSELSDEEESTSRNTSLSETSRGGQPSVTTKSARDKKTEAAPLKSKSEKAGSEKRSSRRTGPQSPCERTDIRMAIVADHLGLSWTELARELNFSVDEINQIRVENPNSLISQSFMLLKKWVTRDGKNATTDALTSVLTKINRIDIVTLLEGPIFDYGNISGTRSFADENNVFHDPVDGWQNETSSGNLESCAQARRVTGGLLDRLDDSPDQCRDSITSYLKGEAGKFEANGSHTEITPEAKTKSYFPESQNDVGKQSTKETLKPKIHGSGHVEEPASPLAAYQKSLEETSKLIIEETKPCVPVSMKKMSRTSPADGKPRLSLHEEEGSSGSEQKQGEGFKVKTKKEIRHVEKKSHS.

Positions 1 to 44 (MAHAASQLKKNRDLEINAEEEPEKKRKHRKRSRDRKKKSDANAS) are disordered. Positions 25 to 38 (KRKHRKRSRDRKKK) are enriched in basic residues. Residue Ser39 is modified to Phosphoserine. 23 ANK repeats span residues 73–102 (NGLN…NVDA), 106–135 (KGNT…NVNA), 139–168 (NGFT…SQSL), 172–201 (DGFT…KGKV), 203–230 (LPAL…NADV), 234–263 (SGFT…AVDF), 267–296 (NDIT…KIDA), 300–329 (DGLT…PILS), 333–362 (NGLS…PVDD), 366–395 (DYLT…NPNA), 399–428 (NGFT…SIQA), 432–461 (SGLT…SPNT), 465–494 (RGET…QVEA), 498–527 (DDQT…SPNA), 531–560 (SGYT…SLSI), 564–593 (KGFT…SPDA), 597–626 (SGLT…SPHA), 630–659 (NGYT…DANA), 663–692 (QGIA…NVNL), 696–725 (SGLT…HVDA), 729–758 (MGYT…KVNA), 762–791 (NGYT…SPNE), and 795–825 (NGNT…TMTT). Position 468 is a phosphoserine (Thr468). Ser623 is subject to Phosphoserine. Phosphoserine occurs at positions 765 and 791. Ser847, Ser861, Ser867, Ser913, Ser916, Ser922, Ser957, Ser959, and Ser1113 each carry phosphoserine. 2 ZU5 domains span residues 984–1139 (FLVS…VVSR) and 1141–1288 (KQES…LADC). Positions 1273 to 1407 (VSFTTNVSAR…SIKIRDTSQE (135 aa)) are UPA domain. Residues Ser1445, Ser1459, and Ser1470 each carry the phosphoserine modification. Over residues 1519–1539 (SGFTSLSSSSSNTPSASPLKS) the composition is skewed to low complexity. The disordered stretch occupies residues 1519–1540 (SGFTSLSSSSSNTPSASPLKSI). Phosphoserine is present on residues Ser1622, Ser1625, Ser1632, Ile1651, Leu1658, Ser1984, Ser2111, Ser2123, and Ser2126. Disordered stretches follow at residues 1968 to 1987 (VDNK…SPED), 2107 to 2159 (TILE…VPIP), 2176 to 2245 (YDPS…EETH), 2299 to 2322 (AVSP…DNQM), 2383 to 2433 (FPCS…ISDD), 2474 to 2508 (DVSH…KIAT), 2588 to 2751 (LTEV…VKKI), 2795 to 2824 (QSNE…MPDS), 3036 to 3067 (PPLE…DVFD), 3131 to 3272 (TFYT…KKHH), 3298 to 3516 (PVIR…SVFP), 3538 to 3607 (KGLD…HEGK), 3635 to 3718 (GEHT…DPKL), 3868 to 3897 (KATS…QSEK), and 4019 to 4090 (KKMQ…CERT). The span at 1977–1986 (PKSDKGHSPE) shows a compositional bias: basic and acidic residues. The span at 2115 to 2136 (FSQHDQDKSPLSDSGFETRSEK) shows a compositional bias: basic and acidic residues. The segment covering 2137 to 2146 (TPSAPQSAES) has biased composition (polar residues). Basic and acidic residues predominate over residues 2299–2308 (AVSPDVHKSA). A compositionally biased stretch (acidic residues) spans 2390 to 2399 (GQQEEEELTA). Over residues 2407-2417 (LESSRVNTPVS) the composition is skewed to polar residues. Basic and acidic residues-rich tracts occupy residues 2497 to 2508 (GSDKRSREKIAT) and 2588 to 2612 (LTEV…PEKK). A compositionally biased stretch (low complexity) spans 2622–2631 (SSQSPTSSSP). Polar residues predominate over residues 2706–2716 (SGFQLKQSKLS). Over residues 2720–2742 (LKFEQGTHAKSKDMSQEDRKSDG) the composition is skewed to basic and acidic residues. Over residues 2796-2807 (SNEIVVNDSGSD) the composition is skewed to polar residues. Polar residues-rich tracts occupy residues 3154-3186 (EQVS…SKTP) and 3214-3224 (KSTSLKQTTVE). Basic and acidic residues-rich tracts occupy residues 3227–3242 (AVER…DSNQ) and 3335–3361 (KLKE…KELE). The span at 3377–3402 (SPQNEIAQNGNNDQSITECSIATTAE) shows a compositional bias: polar residues. Over residues 3409–3428 (ATEIDSLDGYDLQDEDDGLT) the composition is skewed to acidic residues. Composition is skewed to basic and acidic residues over residues 3465-3481 (EVIE…DKPP) and 3549-3575 (RGDD…EDRS). Over residues 3576–3598 (PATTPDTTPARTPTDESTPTSEP) the composition is skewed to low complexity. Positions 3637–3651 (HTSEGKSGDQGEGDK) are enriched in basic and acidic residues. 4 stretches are compositionally biased toward polar residues: residues 3654-3669 (VTAT…TVET), 3676-3713 (ETPT…NTSK), 3880-3897 (HMSN…QSEK), and 4033-4052 (SRNT…VTTK). Residues 4053-4076 (SARDKKTEAAPLKSKSEKAGSEKR) show a composition bias toward basic and acidic residues. The Death domain maps to 4090 to 4174 (TDIRMAIVAD…DIVTLLEGPI (85 aa)). Phosphoserine occurs at positions 4211 and 4229. Disordered regions lie at residues 4251–4298 (NGSH…EPAS) and 4323–4377 (PVSM…KSHS). Polar residues predominate over residues 4268 to 4277 (PESQNDVGKQ). Ser4290 and Ser4298 each carry phosphoserine. Residues 4337-4347 (GKPRLSLHEEE) are compositionally biased toward basic and acidic residues. The residue at position 4350 (Ser4350) is a Phosphoserine. The span at 4362–4377 (VKTKKEIRHVEKKSHS) shows a compositional bias: basic residues.

As to quaternary structure, directly interacts with DMD and betaDAG1. This interaction does not interfere with binding between DMD and betaDAG1. It is also required for DMD and betaDAG1 retention at costameres. Interacts (via N-terminal ANK repeats) with SCHIP1 isoform 5 (via C-terminus); this interaction is required for the localization at axon initial segments (AISs) and nodes of Ranvier (NRs). May be a constituent of a NFASC/NRCAM/ankyrin G complex. Interacts with RHBG. Interacts with PLEC and FLNC. Interacts with KCNA1; this inhibits channel activity. Interacts (via ANK repeats) with IQCJ-SCHIP1; required for IQCJ-SCHIP1 localization at axon initial segments (AIS) and nodes of Ranvier. Interacts with SCHIP1. Interacts with SCN5A. Interacts with PKP2 and GJA1/CX43. Expressed in brain, neurons, muscles and other tissues.

It localises to the cytoplasm. The protein resides in the cytoskeleton. It is found in the cell projection. Its subcellular location is the axon. The protein localises to the cell membrane. It localises to the sarcolemma. The protein resides in the postsynaptic cell membrane. It is found in the lysosome. Its subcellular location is the T-tubule. The protein localises to the golgi apparatus. In terms of biological role, membrane-cytoskeleton linker. May participate in the maintenance/targeting of ion channels and cell adhesion molecules at the nodes of Ranvier and axonal initial segments. In skeletal muscle, required for costamere localization of DMD and betaDAG1. Regulates KCNA1 channel activity in function of dietary Mg(2+) levels, and thereby contributes to the regulation of renal Mg(2+) reabsorption. Required for intracellular adhesion and junctional conductance in myocytes, potentially via stabilization of GJA1/CX43 protein abundance and promotion of PKP2, GJA1/CX43, and SCN5A/Nav1.5 localization to cell-cell junctions. Functionally, may be part of a Golgi-specific membrane cytoskeleton in association with beta-spectrin. The sequence is that of Ankyrin-3 from Homo sapiens (Human).